We begin with the raw amino-acid sequence, 170 residues long: Acetyl-CoA decarbonylase/synthase complex subunit epsilon 1 (170 aa).

Belongs to the CdhB family. In terms of assembly, heterotetramer of two alpha and two epsilon subunits. The ACDS complex is made up of alpha, epsilon, beta, gamma and delta subunits with a probable stoichiometry of (alpha(2)epsilon(2))(4)-beta(8)-(gamma(1)delta(1))(8).

Its pathway is one-carbon metabolism; methanogenesis from acetate. Part of a complex that catalyzes the reversible cleavage of acetyl-CoA, allowing growth on acetate as sole source of carbon and energy. The alpha-epsilon subcomponent functions as a carbon monoxide dehydrogenase. The precise role of the epsilon subunit is unclear; it may have a stabilizing role within the alpha(2)epsilon(2) component and/or be involved in electron transfer to FAD during a potential FAD-mediated CO oxidation. This Methanosarcina acetivorans (strain ATCC 35395 / DSM 2834 / JCM 12185 / C2A) protein is Acetyl-CoA decarbonylase/synthase complex subunit epsilon 1 (cdhB1).